Here is a 539-residue protein sequence, read N- to C-terminus: Phosphoenolpyruvate carboxykinase (ATP) (539 aa).

3 residues coordinate substrate: Arg64, Tyr206, and Lys212. ATP is bound by residues Lys212, His231, and 247–255; that span reads GLSGTGKTT. The Mn(2+) site is built by Lys212 and His231. Mn(2+) is bound at residue Asp268. Residues Glu296, Arg332, 448-449, and Thr454 each bind ATP; that span reads RI. Arg332 contacts substrate.

It belongs to the phosphoenolpyruvate carboxykinase (ATP) family. In terms of assembly, monomer. It depends on Mn(2+) as a cofactor.

The protein localises to the cytoplasm. The enzyme catalyses oxaloacetate + ATP = phosphoenolpyruvate + ADP + CO2. Its pathway is carbohydrate biosynthesis; gluconeogenesis. Functionally, involved in the gluconeogenesis. Catalyzes the conversion of oxaloacetate (OAA) to phosphoenolpyruvate (PEP) through direct phosphoryl transfer between the nucleoside triphosphate and OAA. This Salmonella choleraesuis (strain SC-B67) protein is Phosphoenolpyruvate carboxykinase (ATP).